The following is a 70-amino-acid chain: Kappa-scoloptoxin(07)-Ssm2b (70 aa).

Positions 1 to 19 (MLVFYALLFVSVFSSTVMG) are cleaved as a signal peptide. A propeptide spanning residues 20–39 (ATIDKPILREAIEEIDVNKR) is cleaved from the precursor.

Belongs to the scoloptoxin-07 family. In terms of processing, contains 3 disulfide bonds. As to expression, expressed by the venom gland.

Its subcellular location is the secreted. Functionally, inhibits voltage-gated potassium channels. This Scolopendra mutilans (Chinese red-headed centipede) protein is Kappa-scoloptoxin(07)-Ssm2b.